Here is a 265-residue protein sequence, read N- to C-terminus: MFKWPWKADDESGNAEMPWEQALAIPVLAHLSPTEQRKLTQLAARFLQQKRLVALQGLELTPLHQARIALLFCLPVLELGIEWLDGFHEVLIYPAPFVVDDEWEDDIGLVHNQRVVQSGQSWQQGPVVLNWLDIQDSFDASGFNLVVHEVAHKLDARNGDRASGVPLIPLREVAGWEHDLHAAMNNIQDEIDMVGESAASIDAYAATDPAECFAVLSEYFFSAPELFAPRFPALWQRFCHFYQQDPLQRIRENGLQDEDNRRIVH.

Residues His-111, His-148, His-152, and Glu-211 each coordinate Zn(2+).

The protein belongs to the MtfA family. Interacts with Mlc. Zn(2+) is required as a cofactor.

It is found in the cytoplasm. Its function is as follows. Involved in the modulation of the activity of the glucose-phosphotransferase system (glucose-PTS). Interacts with the transcriptional repressor Mlc, preventing its interaction with DNA and leading to the modulation of expression of genes regulated by Mlc, including ptsG, which encodes the PTS system glucose-specific EIICB component. In terms of biological role, shows zinc-dependent metallopeptidase activity. The sequence is that of Mlc titration factor A from Klebsiella pneumoniae (strain 342).